Reading from the N-terminus, the 1312-residue chain is Multidrug resistance protein 3 (1312 aa).

Residues 51-71 (GFIDYILLIGGIIGAMAAGVL) form a helical membrane-spanning segment. Residues 59 to 369 (IGGIIGAMAA…VAMPINALST (311 aa)) form the ABC transmembrane type-1 1 domain. Residue asparagine 98 is glycosylated (N-linked (GlcNAc...) asparagine). The next 5 helical transmembrane spans lie at 127-147 (IYFAIGTTVGMFLMHFCFFVL), 197-217 (KFGVLFQTICGFIAGYAIGFS), 224-244 (LVIMAVTPFMLITVLFLGFFA), 302-322 (VVGVGLGMLLFFMMGSLALGS), and 344-364 (MVVFMSVLMATMSIAQVAMPI). An ABC transporter 1 domain is found at 404–643 (IKLEDVQFRY…KATYYGLVKR (240 aa)). Residue 439 to 446 (GASGCGKS) coordinates ATP. Residues 724–1033 (LLSFLGLIGG…LGQMIPDVGK (310 aa)) form the ABC transmembrane type-1 2 domain. The next 2 membrane-spanning stretches (helical) occupy residues 725–745 (LSFLGLIGGIGAGAVFPFYMI) and 776–796 (IWILLFGLAVFVTTYMYLGLF). Residue asparagine 819 is glycosylated (N-linked (GlcNAc...) asparagine). 3 helical membrane passes run 852 to 872 (VGNVVNTLSSVGFGVGIAFYY), 874 to 894 (WKVALCVMAIAPVLIVIVFLN), and 958 to 978 (AFVSAANTFVTSCISAYSFYI). The 240-residue stretch at 1068–1307 (IEFKDICFRY…KGFYYTLAMQ (240 aa)) folds into the ABC transporter 2 domain. 1103-1110 (GASGCGKS) provides a ligand contact to ATP.

Belongs to the ABC transporter superfamily. ABCB family. Multidrug resistance exporter (TC 3.A.1.201) subfamily.

It is found in the membrane. The enzyme catalyses ATP + H2O + xenobioticSide 1 = ADP + phosphate + xenobioticSide 2.. Energy-dependent efflux pump responsible for decreased drug accumulation in multidrug resistance parasites. This Entamoeba histolytica (strain ATCC 30459 / HM-1:IMSS / ABRM) protein is Multidrug resistance protein 3.